A 145-amino-acid polypeptide reads, in one-letter code: Peptide methionine sulfoxide reductase MsrB (145 aa).

The region spanning 6–129 (KNERLKQLTD…NSAALRFIPV (124 aa)) is the MsrB domain. Cysteine 118 functions as the Nucleophile in the catalytic mechanism.

It belongs to the MsrB Met sulfoxide reductase family.

It catalyses the reaction L-methionyl-[protein] + [thioredoxin]-disulfide + H2O = L-methionyl-(R)-S-oxide-[protein] + [thioredoxin]-dithiol. This chain is Peptide methionine sulfoxide reductase MsrB, found in Listeria innocua serovar 6a (strain ATCC BAA-680 / CLIP 11262).